The sequence spans 71 residues: Small ribosomal subunit protein eS31 (71 aa).

Residues cysteine 35, cysteine 38, cysteine 53, and cysteine 56 each contribute to the Zn(2+) site. The C4-type zinc-finger motif lies at 35–56 (CPKCGAGVFMAEHLNRYACGKC).

This sequence belongs to the eukaryotic ribosomal protein eS31 family. Part of the 30S ribosomal subunit. Requires Zn(2+) as cofactor.

In Methanococcus vannielii (strain ATCC 35089 / DSM 1224 / JCM 13029 / OCM 148 / SB), this protein is Small ribosomal subunit protein eS31.